We begin with the raw amino-acid sequence, 648 residues long: MTDRLVPASLALRDDGTLVSPEFGDLHLGASGALAHRVFVAGNGLPTRWQDRRTFTIVATGFGAGGSFLAAWAAWRDDPARCERLHFVAVEPHPFSRDDLRRAATHIVADTTISADVEALADAWPMLVPGLHRLEFDEGRVVLTLAFGESIDMLGKIVARADAFCLDGLASSSDADLQSTDVVRALSKIAGEHATFAVHASSDALKHALGKSGFTYREVDDLLVGEYAPRWRARRHEPPLALPVATRRAIVIGAGLAGCAVVERLAARGWEVTLIERHDRIASDASGNPAGVFHPLMTRDDNVASRLTRGGFLHAIARWRALENAGHAFARSTNGMIHLAESADDFERMRDAFDAFGPPSDYVSLLDIEAARAHLNLSVAQGGLLFPHGGAVWPAGLCAAQYAAAGERVRLLASTRVAKLERRGDAWHALDDAGGTLAEAPVVVLANAGDAARLAGLQHVALQPVRGQLTLLPPGSTAPLPCPTIGDGYAVPLDDGTLLIGATFEPDDVDPAMRAAGHLENLERVRHLLPGLIGDLPDPDTLRGRVAFRWVVGDRLPLLGPLADEAGAIANARALSGAQARDLPRLPGLYGAFGFGSRGLVWAALGAELIASQLEGEPWPLERELADAVDPARFLIRALRARRVGRAG.

The tRNA (mnm(5)s(2)U34)-methyltransferase stretch occupies residues 1-228; sequence MTDRLVPASL…VDDLLVGEYA (228 aa). The FAD-dependent cmnm(5)s(2)U34 oxidoreductase stretch occupies residues 252 to 648; sequence IGAGLAGCAV…LRARRVGRAG (397 aa).

In the N-terminal section; belongs to the methyltransferase superfamily. tRNA (mnm(5)s(2)U34)-methyltransferase family. It in the C-terminal section; belongs to the DAO family. Requires FAD as cofactor.

The protein localises to the cytoplasm. The enzyme catalyses 5-aminomethyl-2-thiouridine(34) in tRNA + S-adenosyl-L-methionine = 5-methylaminomethyl-2-thiouridine(34) in tRNA + S-adenosyl-L-homocysteine + H(+). Catalyzes the last two steps in the biosynthesis of 5-methylaminomethyl-2-thiouridine (mnm(5)s(2)U) at the wobble position (U34) in tRNA. Catalyzes the FAD-dependent demodification of cmnm(5)s(2)U34 to nm(5)s(2)U34, followed by the transfer of a methyl group from S-adenosyl-L-methionine to nm(5)s(2)U34, to form mnm(5)s(2)U34. This chain is tRNA 5-methylaminomethyl-2-thiouridine biosynthesis bifunctional protein MnmC, found in Burkholderia lata (strain ATCC 17760 / DSM 23089 / LMG 22485 / NCIMB 9086 / R18194 / 383).